We begin with the raw amino-acid sequence, 196 residues long: Adenylyl-sulfate kinase (196 aa).

31-38 (GLSGAGKS) is an ATP binding site. Residue Ser105 is the Phosphoserine intermediate of the active site.

The protein belongs to the APS kinase family.

The catalysed reaction is adenosine 5'-phosphosulfate + ATP = 3'-phosphoadenylyl sulfate + ADP + H(+). It participates in sulfur metabolism; hydrogen sulfide biosynthesis; sulfite from sulfate: step 2/3. In terms of biological role, catalyzes the synthesis of activated sulfate. The protein is Adenylyl-sulfate kinase of Aeromonas salmonicida (strain A449).